Here is a 266-residue protein sequence, read N- to C-terminus: Agamous-like MADS-box protein AGL97 (266 aa).

The MADS-box domain maps to 3 to 63 (GVKRKIAIEK…SNSNAAFYSF (61 aa)). A coiled-coil region spans residues 88–130 (WEDESLLKSENLEELREAMDSMSTMLRDLKELEKQRDHQTQTL).

Interacts with AGL27 and AGL62.

Its subcellular location is the nucleus. Its function is as follows. Putative transcription factor. This is Agamous-like MADS-box protein AGL97 (AGL97) from Arabidopsis thaliana (Mouse-ear cress).